The chain runs to 360 residues: MIIYATEVETINSFVRLESLNEVYGLVWIFVPIFSLVLGIITGVLVIVWLERQISAGIQQRIGPEYAGPLGILQALADGTKLLFKEDLRPSRGNTPLFSIGPSIAVISILLSYSVIPFSNHLVLADLNIGIFLWIAISSIAPIGLLMSGYGSNNKYSFLGGLRAAAQSISYEIPLTLCVLSISLLSNSLSTVDIVEAQSKYGFWGWNLWRQPIGFIIFLISSLAECERLPFDLPEAEEELIAGYQTEYSGIKFGLFYVASYLNLLISALFVTILYLGGWNISIPYISILEVFKRNPVFGTTIGIFITLAKTYLVLVISIATRWTLPRLRMDQLLNLGWKFLLPISLGNLLLTTSFQLLSL.

Transmembrane regions (helical) follow at residues 27–47 (VWIF…VLVI), 98–118 (FSIG…VIPF), 129–149 (IGIF…LMSG), 165–185 (AAQS…ISLL), 203–223 (FWGW…ISSL), 253–273 (FGLF…FVTI), 297–317 (VFGT…VLVI), and 340–360 (FLLP…LLSL).

This sequence belongs to the complex I subunit 1 family. NDH is composed of at least 16 different subunits, 5 of which are encoded in the nucleus.

The protein localises to the plastid. It is found in the chloroplast thylakoid membrane. It catalyses the reaction a plastoquinone + NADH + (n+1) H(+)(in) = a plastoquinol + NAD(+) + n H(+)(out). It carries out the reaction a plastoquinone + NADPH + (n+1) H(+)(in) = a plastoquinol + NADP(+) + n H(+)(out). In terms of biological role, NDH shuttles electrons from NAD(P)H:plastoquinone, via FMN and iron-sulfur (Fe-S) centers, to quinones in the photosynthetic chain and possibly in a chloroplast respiratory chain. The immediate electron acceptor for the enzyme in this species is believed to be plastoquinone. Couples the redox reaction to proton translocation, and thus conserves the redox energy in a proton gradient. The protein is NAD(P)H-quinone oxidoreductase subunit 1, chloroplastic of Draba nemorosa (Woodland whitlowgrass).